Consider the following 129-residue polypeptide: MSNVPAELKYSKEHEWLRKEADGTYTVGITEHAQELLGDMVFVDLPEVGATVSAGDDCAVAESVKAASDIYAPVSGEIVAVNDALSDSPELVNSEPYADGWIFKIKASNESELESLLDATAYEALLEDE.

The Lipoyl-binding domain maps to 24–106 (TYTVGITEHA…YADGWIFKIK (83 aa)). Residue lysine 65 is modified to N6-lipoyllysine.

It belongs to the GcvH family. As to quaternary structure, the glycine cleavage system is composed of four proteins: P, T, L and H. (R)-lipoate is required as a cofactor.

Its function is as follows. The glycine cleavage system catalyzes the degradation of glycine. The H protein shuttles the methylamine group of glycine from the P protein to the T protein. The sequence is that of Glycine cleavage system H protein from Salmonella arizonae (strain ATCC BAA-731 / CDC346-86 / RSK2980).